A 263-amino-acid polypeptide reads, in one-letter code: Ribosomal RNA small subunit methyltransferase A (263 aa).

S-adenosyl-L-methionine contacts are provided by asparagine 13, threonine 15, glycine 40, glutamate 61, aspartate 85, and asparagine 105.

The protein belongs to the class I-like SAM-binding methyltransferase superfamily. rRNA adenine N(6)-methyltransferase family. RsmA subfamily.

It localises to the cytoplasm. The catalysed reaction is adenosine(1518)/adenosine(1519) in 16S rRNA + 4 S-adenosyl-L-methionine = N(6)-dimethyladenosine(1518)/N(6)-dimethyladenosine(1519) in 16S rRNA + 4 S-adenosyl-L-homocysteine + 4 H(+). Functionally, specifically dimethylates two adjacent adenosines (A1518 and A1519) in the loop of a conserved hairpin near the 3'-end of 16S rRNA in the 30S particle. May play a critical role in biogenesis of 30S subunits. This is Ribosomal RNA small subunit methyltransferase A from Mycoplasma pneumoniae (strain ATCC 29342 / M129 / Subtype 1) (Mycoplasmoides pneumoniae).